Consider the following 125-residue polypeptide: Anticoagulant salivary protein 14 (125 aa).

The N-terminal stretch at 1–21 (MGLTGTMLVLVSLAFFGSAAA) is a signal peptide. N26, N81, and N87 each carry an N-linked (GlcNAc...) asparagine glycan. Residues 75 to 86 (GECHLTNNSGGP) are compositionally biased toward polar residues. Residues 75–125 (GECHLTNNSGGPNETDDYTPAPTEKPKQKKKKTKKTKKPKRKSKKDQEKNL) form a disordered region. Positions 91-125 (DYTPAPTEKPKQKKKKTKKTKKPKRKSKKDQEKNL) are responsible for anticoagulant activity. A compositionally biased stretch (basic residues) spans 101-118 (KQKKKKTKKTKKPKRKSK).

The protein belongs to the salp14 family. Salivary gland (at protein level). Saliva (at protein level).

It localises to the secreted. Salivary anticoagulant protein that facilitates blood feeding of adult ticks on vertebrate species. Inhibits host coagulation factor Xa (F10). Blocks the assembly and/or early activity of the prothrombinase complex (Xa-Va/F10-F5). Inhibits the lectin pathway of complement system activation in the host. The protein is Anticoagulant salivary protein 14 of Ixodes scapularis (Black-legged tick).